We begin with the raw amino-acid sequence, 144 residues long: Large ribosomal subunit protein uL15 (144 aa).

The segment at 1 to 52 is disordered; sequence MRLNTISSAPGAKQAEKRVGRGIGSGWGKTCGRGHKGQKSRSGGFHKVGFEG. Residues 21-31 are compositionally biased toward gly residues; sequence RGIGSGWGKTC.

The protein belongs to the universal ribosomal protein uL15 family. In terms of assembly, part of the 50S ribosomal subunit.

Its function is as follows. Binds to the 23S rRNA. The chain is Large ribosomal subunit protein uL15 from Nitrosococcus oceani (strain ATCC 19707 / BCRC 17464 / JCM 30415 / NCIMB 11848 / C-107).